A 523-amino-acid chain; its full sequence is Probable FAD synthase (523 aa).

The interval 20-111 (AIVVIGDEIL…TDQLHFSDEI (92 aa)) is molybdenum cofactor biosynthesis protein-like. The FAD synthase stretch occupies residues 332 to 489 (QIALSFNGGK…SLGGRDNTVK (158 aa)).

It in the N-terminal section; belongs to the MoaB/Mog family. This sequence in the C-terminal section; belongs to the PAPS reductase family. FAD1 subfamily. Mg(2+) is required as a cofactor.

The catalysed reaction is FMN + ATP + H(+) = FAD + diphosphate. It participates in cofactor biosynthesis; FAD biosynthesis; FAD from FMN: step 1/1. Its function is as follows. Catalyzes the adenylation of flavin mononucleotide (FMN) to form flavin adenine dinucleotide (FAD) coenzyme. This chain is Probable FAD synthase, found in Caenorhabditis briggsae.